Here is a 74-residue protein sequence, read N- to C-terminus: uncharacterized protein (74 aa).

The chain crosses the membrane as a helical span at residues 8-30; sequence LAAAVSSSAASAGVSRIAASAMA.

The protein localises to the mitochondrion outer membrane. This is an uncharacterized protein from Saccharomyces cerevisiae (strain ATCC 204508 / S288c) (Baker's yeast).